A 107-amino-acid polypeptide reads, in one-letter code: Serine palmitoyltransferase-regulating protein TSC3 (107 aa).

The helical transmembrane segment at 72–92 (VFFLVVFTLSLFGLLKWVLSL) threads the bilayer.

Its subcellular location is the endoplasmic reticulum membrane. Its function is as follows. Stimulates the activity of serine palmitoyltransferase (SPT). The chain is Serine palmitoyltransferase-regulating protein TSC3 (TSC3) from Eremothecium gossypii (strain ATCC 10895 / CBS 109.51 / FGSC 9923 / NRRL Y-1056) (Yeast).